Here is a 191-residue protein sequence, read N- to C-terminus: Signal peptidase IB (191 aa).

Over 1–7 (MKKELLE) the chain is Cytoplasmic. The helical transmembrane segment at 8–28 (WIISIAVAFVILFIVGKFIVT) threads the bilayer. Over 29-191 (PYTIKGESMD…YNFNPENTKN (163 aa)) the chain is Extracellular. Catalysis depends on residues Ser-36 and Lys-77.

This sequence belongs to the peptidase S26 family.

The protein localises to the cell membrane. It carries out the reaction Cleavage of hydrophobic, N-terminal signal or leader sequences from secreted and periplasmic proteins.. Essential for cell viability. This is Signal peptidase IB (spsB) from Staphylococcus aureus (strain MRSA252).